Consider the following 736-residue polypeptide: Elongation factor 2 (736 aa).

The 245-residue stretch at 18-262 folds into the tr-type G domain; the sequence is TRVRNIGIIA…AVIKFVPNPV (245 aa). Residues 27-34, 93-97, and 147-150 each bind GTP; these read AHVDHGKT, DTPGH, and NKVD. The residue at position 603 (His-603) is a Diphthamide.

The protein belongs to the TRAFAC class translation factor GTPase superfamily. Classic translation factor GTPase family. EF-G/EF-2 subfamily.

Its subcellular location is the cytoplasm. Functionally, catalyzes the GTP-dependent ribosomal translocation step during translation elongation. During this step, the ribosome changes from the pre-translocational (PRE) to the post-translocational (POST) state as the newly formed A-site-bound peptidyl-tRNA and P-site-bound deacylated tRNA move to the P and E sites, respectively. Catalyzes the coordinated movement of the two tRNA molecules, the mRNA and conformational changes in the ribosome. The sequence is that of Elongation factor 2 from Metallosphaera sedula (strain ATCC 51363 / DSM 5348 / JCM 9185 / NBRC 15509 / TH2).